Here is a 416-residue protein sequence, read N- to C-terminus: Adipocyte plasma membrane-associated protein (416 aa).

Residues 1–32 (MSEADGLRQRRPLRPQVVTDDDGQAPEAKDGS) are disordered. An N-acetylserine modification is found at serine 2. Residues 2 to 40 (SEADGLRQRRPLRPQVVTDDDGQAPEAKDGSSFSGRVFR) lie on the Cytoplasmic side of the membrane. Residue threonine 19 is modified to Phosphothreonine. Residues 41–61 (VTFLMLAVSLTVPLLGAMMLL) form a helical; Signal-anchor for type II membrane protein membrane-spanning segment. At 62 to 416 (ESPIDPQPLS…FLCRLSLQAV (355 aa)) the chain is on the extracellular side. N-linked (GlcNAc...) asparagine glycans are attached at residues asparagine 160 and asparagine 196.

It belongs to the strictosidine synthase family. As to expression, liver, glomerular and tubular structures of the kidney, endothelial cells, arterial wall and pancreatic islets of Langerhans (at protein level). Found ubiquitously in adult as well as in embryonic tissues. In adult tissue, the highest expression is found in the liver, placenta and heart. Found on the cell surface of monocytes. In embryonic tissue, the highest expression levels is found in the liver and the kidney.

It localises to the membrane. Exhibits strong arylesterase activity with beta-naphthyl acetate and phenyl acetate. May play a role in adipocyte differentiation. The protein is Adipocyte plasma membrane-associated protein (APMAP) of Homo sapiens (Human).